A 468-amino-acid polypeptide reads, in one-letter code: Soluble pyridine nucleotide transhydrogenase (468 aa).

An FAD-binding site is contributed by 38 to 47; sequence ERHYNVGGGC.

The protein belongs to the class-I pyridine nucleotide-disulfide oxidoreductase family. It depends on FAD as a cofactor.

The protein localises to the cytoplasm. It catalyses the reaction NAD(+) + NADPH = NADH + NADP(+). In terms of biological role, conversion of NADPH, generated by peripheral catabolic pathways, to NADH, which can enter the respiratory chain for energy generation. The polypeptide is Soluble pyridine nucleotide transhydrogenase (Pectobacterium atrosepticum (strain SCRI 1043 / ATCC BAA-672) (Erwinia carotovora subsp. atroseptica)).